The primary structure comprises 327 residues: Transaldolase (327 aa).

Residue Lys-132 is the Schiff-base intermediate with substrate of the active site.

Belongs to the transaldolase family. Type 1 subfamily.

It is found in the cytoplasm. It carries out the reaction D-sedoheptulose 7-phosphate + D-glyceraldehyde 3-phosphate = D-erythrose 4-phosphate + beta-D-fructose 6-phosphate. It participates in carbohydrate degradation; pentose phosphate pathway; D-glyceraldehyde 3-phosphate and beta-D-fructose 6-phosphate from D-ribose 5-phosphate and D-xylulose 5-phosphate (non-oxidative stage): step 2/3. Its function is as follows. Transaldolase is important for the balance of metabolites in the pentose-phosphate pathway. In Chlamydia muridarum (strain MoPn / Nigg), this protein is Transaldolase.